Reading from the N-terminus, the 1004-residue chain is 2-oxoglutarate dehydrogenase E1 component (1004 aa).

It belongs to the alpha-ketoglutarate dehydrogenase family. Homodimer. Part of the 2-oxoglutarate dehydrogenase (OGDH) complex composed of E1 (2-oxoglutarate dehydrogenase), E2 (dihydrolipoamide succinyltransferase) and E3 (dihydrolipoamide dehydrogenase); the complex contains multiple copies of the three enzymatic components (E1, E2 and E3). Requires thiamine diphosphate as cofactor.

The enzyme catalyses N(6)-[(R)-lipoyl]-L-lysyl-[protein] + 2-oxoglutarate + H(+) = N(6)-[(R)-S(8)-succinyldihydrolipoyl]-L-lysyl-[protein] + CO2. Functionally, E1 component of the 2-oxoglutarate dehydrogenase (OGDH) complex which catalyzes the decarboxylation of 2-oxoglutarate, the first step in the conversion of 2-oxoglutarate to succinyl-CoA and CO(2). This Brucella melitensis biotype 2 (strain ATCC 23457) protein is 2-oxoglutarate dehydrogenase E1 component.